A 321-amino-acid polypeptide reads, in one-letter code: MSKPIVMERGVKYRDADKMALIPVKTVVTERTEVLRKPEWMKIKLPADSSRIQGIKAAMRKNGLHSVCEEASCPNLAECFNHGTATFMILGAICTRRCPFCDVAHGRPTTPDANEPGKLAQTIADMALRYVVITSVDRDDLRDGGAQHFADCISAIREKSPTIKIETLVPDFRGRMDRALEILNATPPDVFNHNLENVPRVYRQVRPGANYDWSLKLLERFKEAHPEIPTKSGLMVGLGETNAEIVEVMRDLRRHGVTMLTLGQYLQPSRHHLPVQRYVSPAEFDEMKAAAMDMGFTHAACGPFVRSSYHADMQAKGLEVK.

[4Fe-4S] cluster contacts are provided by C68, C73, C79, C94, C98, C101, and S308. A Radical SAM core domain is found at 80–297; that stretch reads FNHGTATFMI…KAAAMDMGFT (218 aa).

Belongs to the radical SAM superfamily. Lipoyl synthase family. [4Fe-4S] cluster is required as a cofactor.

It localises to the cytoplasm. The enzyme catalyses [[Fe-S] cluster scaffold protein carrying a second [4Fe-4S](2+) cluster] + N(6)-octanoyl-L-lysyl-[protein] + 2 oxidized [2Fe-2S]-[ferredoxin] + 2 S-adenosyl-L-methionine + 4 H(+) = [[Fe-S] cluster scaffold protein] + N(6)-[(R)-dihydrolipoyl]-L-lysyl-[protein] + 4 Fe(3+) + 2 hydrogen sulfide + 2 5'-deoxyadenosine + 2 L-methionine + 2 reduced [2Fe-2S]-[ferredoxin]. The protein operates within protein modification; protein lipoylation via endogenous pathway; protein N(6)-(lipoyl)lysine from octanoyl-[acyl-carrier-protein]: step 2/2. Functionally, catalyzes the radical-mediated insertion of two sulfur atoms into the C-6 and C-8 positions of the octanoyl moiety bound to the lipoyl domains of lipoate-dependent enzymes, thereby converting the octanoylated domains into lipoylated derivatives. The sequence is that of Lipoyl synthase from Erwinia tasmaniensis (strain DSM 17950 / CFBP 7177 / CIP 109463 / NCPPB 4357 / Et1/99).